The chain runs to 391 residues: Matrix metalloproteinase-23 (391 aa).

Residues 1–19 lie on the Cytoplasmic side of the membrane; sequence MGWRACLRPEASGAVQGRW. Positions 1–79 are excised as a propeptide; sequence MGWRACLRPE…LSMLVTRRRR (79 aa). Residues 20–38 form a helical; Signal-anchor for type II membrane protein membrane-spanning segment; that stretch reads LGAVLSGLCLLSALAFLEW. Topologically, residues 39–391 are lumenal; sequence LGSPTETAWN…TYSWRVRVRS (353 aa). N-linked (GlcNAc...) asparagine glycans are attached at residues Asn93 and Asn149. His212 is a Zn(2+) binding site. Glu213 is a catalytic residue. Residues His216 and His222 each contribute to the Zn(2+) site. Residue Asn233 is glycosylated (N-linked (GlcNAc...) asparagine). Residues 256–290 enclose the ShKT domain; that stretch reads CLDRIFVCTSWARKGFCDVRQRLMKRLCPRSCDFC. Intrachain disulfides connect Cys256–Cys290, Cys263–Cys283, and Cys272–Cys287. In terms of domain architecture, Ig-like C2-type spans 296–381; sequence PTVATTTSPT…VVRHRQRVLT (86 aa). N-linked (GlcNAc...) asparagine glycosylation occurs at Asn317. A disulfide bridge connects residues Cys322 and Cys371.

It belongs to the peptidase M10A family. Zn(2+) serves as cofactor. In terms of processing, N-glycosylated. Post-translationally, proteolytic cleavage might yield an active form. As to expression, expressed at the highest levels in ovary and uterus. In ovary expression is strictly confined to granulosa cells of preantral and small antral follicles. Detected also in testis and prostate.

The protein resides in the membrane. The protein localises to the endoplasmic reticulum membrane. Inhibited by TIMP2. Its function is as follows. Protease. May regulate the surface expression of some potassium channels by retaining them in the endoplasmic reticulum. The protein is Matrix metalloproteinase-23 (Mmp23) of Rattus norvegicus (Rat).